Here is a 3977-residue protein sequence, read N- to C-terminus: Hybrid PKS-NRPS synthetase gkaA (3977 aa).

Residues Glu4–Asn441 form the Ketosynthase family 3 (KS3) domain. Residues Cys177, His316, and His361 each act as for beta-ketoacyl synthase activity in the active site. Positions Val551–Asp867 constitute a Malonyl-CoA:ACP transacylase (MAT) domain. Residues Asn937 to Ser1072 are N-terminal hotdog fold. The PKS/mFAS DH domain maps to Asn937–Asp1241. The Proton acceptor; for dehydratase activity role is filled by His969. Positions Leu1087–Asp1241 are C-terminal hotdog fold. Asp1147 (proton donor; for dehydratase activity) is an active-site residue. Positions Tyr1286–Glu1580 are methyltransferase (cMeT) domain. A Ketoreductase (KR) domain is found at Thr2128–Val2301. Positions Ser2409 to Met2490 constitute a Carrier 1 domain. Position 2450 is an O-(pantetheine 4'-phosphoryl)serine (Ser2450). The segment at His2497–Val2542 is disordered. A compositionally biased stretch (polar residues) spans Asn2499 to Val2538. Residues Glu2584 to Glu3018 are condensation. The segment at Ile3048–Asp3437 is adenylation. The region spanning Phe3552–Ser3632 is the Carrier 2 domain. Position 3592 is an O-(pantetheine 4'-phosphoryl)serine (Ser3592). The 219-residue stretch at Leu3672–Val3890 folds into the Thioester reductase (TE) domain.

This sequence in the C-terminal section; belongs to the NRP synthetase family. The cofactor is pantetheine 4'-phosphate.

Its pathway is mycotoxin biosynthesis. Functionally, hybrid PKS-NRPS synthetase; part of the gene cluster that mediates the biosynthesis of GKK1032, fungal natural products containing a macrocyclic para-cyclophane connected to a decahydrofluorene ring system that show potent antitumor activities. Within the pathway, the PKS-NRPS gkaA, with the help of the trans-enoyl reductase gkaC, synthesize the polyketide-tyrosyl acyl thioester product which can be reductively off-loaded by the terminal reductase (R) domain in gkaA. The PKS module of gkaA acts in combination with the trans-acting enoyl reductase gkaC to produce a methylated polyketide attached to the ACP domain. In parallel, the adenylation (A) domain of the NRPS module activated L-tyrosine, which is then transferred to the ACP domain. The condensation (C) domain subsequently links this group to the polyketide chain, forming an enzyme-bound amide. The alpha/beta hydrolase gkaG is then required to catalyze the subsequent Knoevenagel condensation that affords the 3-pyrrolin-2-one ring, whereas the three proteins gkaB, gkadX and gkaZ then function synergistically to form the cyclophane. This Penicillium citrinum protein is Hybrid PKS-NRPS synthetase gkaA.